The chain runs to 96 residues: Co-chaperonin GroES (96 aa).

This sequence belongs to the GroES chaperonin family. Heptamer of 7 subunits arranged in a ring. Interacts with the chaperonin GroEL.

It localises to the cytoplasm. Its function is as follows. Together with the chaperonin GroEL, plays an essential role in assisting protein folding. The GroEL-GroES system forms a nano-cage that allows encapsulation of the non-native substrate proteins and provides a physical environment optimized to promote and accelerate protein folding. GroES binds to the apical surface of the GroEL ring, thereby capping the opening of the GroEL channel. The sequence is that of Co-chaperonin GroES from Wolbachia sp. subsp. Brugia malayi (strain TRS).